An 883-amino-acid chain; its full sequence is Pyruvate, phosphate dikinase 2 (883 aa).

The segment at 1–21 (MAPAPCGRSSQRVFHFGKGKS) is disordered. Histidine 465 functions as the Tele-phosphohistidine intermediate in the catalytic mechanism. Arginine 571, arginine 628, glutamate 757, glycine 778, threonine 779, asparagine 780, and aspartate 781 together coordinate substrate. Glutamate 757 is a binding site for Mg(2+). Aspartate 781 contributes to the Mg(2+) binding site. Catalysis depends on cysteine 843, which acts as the Proton donor.

Belongs to the PEP-utilizing enzyme family. Requires Mg(2+) as cofactor. Expressed in leaves, roots and stems.

The protein localises to the cytoplasm. It catalyses the reaction pyruvate + phosphate + ATP = phosphoenolpyruvate + AMP + diphosphate + H(+). Its function is as follows. Formation of phosphoenolpyruvate, which is the primary acceptor of CO(2) in C4 and some Crassulacean acid metabolism plants. The polypeptide is Pyruvate, phosphate dikinase 2 (Zea mays (Maize)).